We begin with the raw amino-acid sequence, 165 residues long: MISVATAECFTHGKIGIKIHKMACGYRELEKDPNYGIINGNVFVMASMFLPSKKGIESILNVKLPEPDYVFKYSKAYTQENDILVAKMVANALKNKLKCNIAISSTAGVGKGAVCILTDNNEYVFTSDVYGDLIKGENILKRQTNGLNKSFDTFVEILKKEYGLK.

Belongs to the UPF0254 family.

This is UPF0254 protein MmarC5_0742 from Methanococcus maripaludis (strain C5 / ATCC BAA-1333).